Consider the following 355-residue polypeptide: Protein RecA (355 aa).

65–72 (GPESSGKT) contributes to the ATP binding site.

This sequence belongs to the RecA family.

Its subcellular location is the cytoplasm. In terms of biological role, can catalyze the hydrolysis of ATP in the presence of single-stranded DNA, the ATP-dependent uptake of single-stranded DNA by duplex DNA, and the ATP-dependent hybridization of homologous single-stranded DNAs. It interacts with LexA causing its activation and leading to its autocatalytic cleavage. The chain is Protein RecA from Pseudomonas putida (strain ATCC 47054 / DSM 6125 / CFBP 8728 / NCIMB 11950 / KT2440).